The primary structure comprises 145 residues: D-aminoacyl-tRNA deacylase (145 aa).

A Gly-cisPro motif, important for rejection of L-amino acids motif is present at residues 137 to 138 (GP).

This sequence belongs to the DTD family. Homodimer.

It is found in the cytoplasm. The catalysed reaction is glycyl-tRNA(Ala) + H2O = tRNA(Ala) + glycine + H(+). It carries out the reaction a D-aminoacyl-tRNA + H2O = a tRNA + a D-alpha-amino acid + H(+). Its function is as follows. An aminoacyl-tRNA editing enzyme that deacylates mischarged D-aminoacyl-tRNAs. Also deacylates mischarged glycyl-tRNA(Ala), protecting cells against glycine mischarging by AlaRS. Acts via tRNA-based rather than protein-based catalysis; rejects L-amino acids rather than detecting D-amino acids in the active site. By recycling D-aminoacyl-tRNA to D-amino acids and free tRNA molecules, this enzyme counteracts the toxicity associated with the formation of D-aminoacyl-tRNA entities in vivo and helps enforce protein L-homochirality. This is D-aminoacyl-tRNA deacylase from Pectobacterium carotovorum subsp. carotovorum (strain PC1).